A 520-amino-acid polypeptide reads, in one-letter code: Putative lipase ATG15 (520 aa).

Over 1–14 (MLHKSPSRKRFASP) the chain is Cytoplasmic. Residues 15–35 (LHLGCILTLTVLCLIAYYFAL) form a helical; Signal-anchor for type II membrane protein membrane-spanning segment. Residues 36–520 (PDYLSVGKSS…WLGFCTKYEL (485 aa)) lie on the Lumenal side of the membrane. Residues N173, N202, and N208 are each glycosylated (N-linked (GlcNAc...) asparagine). The active-site Charge relay system is S332.

Belongs to the AB hydrolase superfamily. Lipase family. Binds to both phosphatidylinositol (PI) and phosphatidylinositol 3,5-bisphosphate (PIP2). In terms of processing, glycosylated.

The protein localises to the endosome. Its subcellular location is the multivesicular body membrane. It is found in the prevacuolar compartment membrane. The catalysed reaction is a triacylglycerol + H2O = a diacylglycerol + a fatty acid + H(+). Functionally, lipase which is essential for lysis of subvacuolar cytoplasm to vacuole targeted bodies and intravacuolar autophagic bodies. Involved in the lysis of intravacuolar multivesicular body (MVB) vesicles. The intravacuolar membrane disintegration by ATG15 is critical to life span extension. The chain is Putative lipase ATG15 (ATG15) from Saccharomyces cerevisiae (strain ATCC 204508 / S288c) (Baker's yeast).